A 703-amino-acid polypeptide reads, in one-letter code: Methionine--tRNA ligase (703 aa).

The 'HIGH' region signature appears at 15 to 25 (PYANGPVHLGH). Residues cysteine 147, cysteine 150, cysteine 160, and cysteine 163 each coordinate Zn(2+). Residues 345–349 (KFSKS) carry the 'KMSKS' region motif. Lysine 348 is an ATP binding site. One can recognise a tRNA-binding domain in the interval 602 to 703 (DFQKIDLRVA…GEGINGNSVS (102 aa)).

Belongs to the class-I aminoacyl-tRNA synthetase family. MetG type 1 subfamily. As to quaternary structure, homodimer. Requires Zn(2+) as cofactor.

It is found in the cytoplasm. The enzyme catalyses tRNA(Met) + L-methionine + ATP = L-methionyl-tRNA(Met) + AMP + diphosphate. Functionally, is required not only for elongation of protein synthesis but also for the initiation of all mRNA translation through initiator tRNA(fMet) aminoacylation. In Chlorobaculum tepidum (strain ATCC 49652 / DSM 12025 / NBRC 103806 / TLS) (Chlorobium tepidum), this protein is Methionine--tRNA ligase.